A 260-amino-acid polypeptide reads, in one-letter code: MVKFYDREISSRLLIGSALYPSPAIMQDSIRESGADIVTVSLRREAAGGKAGDQFWSLIRELGVTVLPNTAGCRSVREAVTTAKLARELFGTAWIKLEVIADNDTLQPDVVGLVEAAQILTKDGFEVFPYCTEDLSVAMRLVDAGCRVIMPWAAPIGSARGIVARDALKLLRDRLPDITLVVDAGLGAPSHAAEAMELGYDAVLLNTAIAKAEDPVAMARAFKLAVEAGRTGFEAGLMGARDFASPSTPVIGTPFWHAVS.

Residue K96 is the Schiff-base intermediate with DXP of the active site. 1-deoxy-D-xylulose 5-phosphate-binding positions include G157, 184–185, and 206–207; these read AG and NT.

It belongs to the ThiG family. Homotetramer. Forms heterodimers with either ThiH or ThiS.

The protein resides in the cytoplasm. It carries out the reaction [ThiS sulfur-carrier protein]-C-terminal-Gly-aminoethanethioate + 2-iminoacetate + 1-deoxy-D-xylulose 5-phosphate = [ThiS sulfur-carrier protein]-C-terminal Gly-Gly + 2-[(2R,5Z)-2-carboxy-4-methylthiazol-5(2H)-ylidene]ethyl phosphate + 2 H2O + H(+). It participates in cofactor biosynthesis; thiamine diphosphate biosynthesis. Functionally, catalyzes the rearrangement of 1-deoxy-D-xylulose 5-phosphate (DXP) to produce the thiazole phosphate moiety of thiamine. Sulfur is provided by the thiocarboxylate moiety of the carrier protein ThiS. In vitro, sulfur can be provided by H(2)S. In Rhodopseudomonas palustris (strain HaA2), this protein is Thiazole synthase.